A 362-amino-acid polypeptide reads, in one-letter code: tRNA-specific 2-thiouridylase MnmA (362 aa).

ATP is bound by residues 6 to 13 (AMSGGVDS) and Leu-32. Cys-101 functions as the Nucleophile in the catalytic mechanism. The cysteines at positions 101 and 197 are disulfide-linked. ATP is bound at residue Gly-125. The tract at residues 147–149 (KDQ) is interaction with tRNA. Catalysis depends on Cys-197, which acts as the Cysteine persulfide intermediate.

The protein belongs to the MnmA/TRMU family.

It localises to the cytoplasm. The enzyme catalyses S-sulfanyl-L-cysteinyl-[protein] + uridine(34) in tRNA + AH2 + ATP = 2-thiouridine(34) in tRNA + L-cysteinyl-[protein] + A + AMP + diphosphate + H(+). Functionally, catalyzes the 2-thiolation of uridine at the wobble position (U34) of tRNA, leading to the formation of s(2)U34. This chain is tRNA-specific 2-thiouridylase MnmA, found in Saccharopolyspora erythraea (strain ATCC 11635 / DSM 40517 / JCM 4748 / NBRC 13426 / NCIMB 8594 / NRRL 2338).